The chain runs to 592 residues: Alpha-1,3-galactosidase B (592 aa).

The signal sequence occupies residues 1–14 (MKLLSVLSLSLVLS). A lipid anchor (N-palmitoyl cysteine) is attached at Cys15. A lipid anchor (S-diacylglycerol cysteine) is attached at Cys15. PbH1 repeat units lie at residues 429-451 (TPEVLFSGNVIRNNRARGSLFST), 452-474 (PRKTIVENNLFDHTSGAAILLCG), and 485-538 (CRHV…VIED).

The protein belongs to the glycosyl hydrolase 110 family. B subfamily.

The protein resides in the cell membrane. The enzyme catalyses Hydrolysis of terminal, non-reducing branched (1-&gt;3)-alpha-D-galactosidic residues, producing free D-galactose.. The catalysed reaction is Hydrolysis of terminal, non-reducing linear (1-&gt;3)-alpha-D-galactosidic residues, producing free D-galactose.. It carries out the reaction Hydrolysis of terminal, non-reducing alpha-D-galactose residues in alpha-D-galactosides, including galactose oligosaccharides, galactomannans and galactolipids.. Alpha-galactosidase. Removes both branched alpha-1,3-linked galactose residues of blood group B antigens and linear alpha-1,3-linked galactose structures. The protein is Alpha-1,3-galactosidase B (glaB1) of Phocaeicola vulgatus (strain ATCC 8482 / DSM 1447 / JCM 5826 / CCUG 4940 / NBRC 14291 / NCTC 11154) (Bacteroides vulgatus).